The following is a 2764-amino-acid chain: Teneurin-2 (2764 aa).

One can recognise a Teneurin N-terminal domain in the interval 1–375 (MDVKDRRHRS…KPSKYCSWKC (375 aa)). Over 1–379 (MDVKDRRHRS…YCSWKCAALS (379 aa)) the chain is Cytoplasmic. Phosphoserine is present on residues Ser90 and Ser124. The disordered stretch occupies residues 111 to 271 (TGSDADSDTE…HHHSSANSLN (161 aa)). The span at 141 to 155 (SSGLSSRENSALTLT) shows a compositional bias: polar residues. Residue Thr155 is modified to Phosphothreonine. Ser157 is modified (phosphoserine). Residues 159–168 (NENKSDDDNG) are compositionally biased toward basic and acidic residues. Over residues 174-188 (TSSSSLLPSAQLPSS) the composition is skewed to low complexity. The segment covering 202 to 211 (DSNTSHQIMD) has biased composition (polar residues). A compositionally biased stretch (low complexity) spans 229 to 240 (SGPQQASSSGPP). The chain crosses the membrane as a helical span at residues 380 to 400 (AIAAALLLAILLAYFIAMHLL). Residues 401–2764 (GLNWQLQPAD…FLRQNEMGKR (2364 aa)) are Extracellular-facing. 2 N-linked (GlcNAc...) asparagine glycosylation sites follow: Asn443 and Asn482. 8 EGF-like domains span residues 575–603 (DCPR…ADCA), 598–634 (LGAD…AECD), 636–668 (PMNQ…EHCE), 669–701 (EVDC…NCEL), 702–735 (ARVQ…PDCS), 737–765 (VCSV…AACD), 768–796 (VCHP…EHCT), and 798–831 (DGCP…PGCN). Cystine bridges form between Cys576-Cys586, Cys580-Cys591, Cys593-Cys602, Cys611-Cys622, Cys624-Cys633, Cys640-Cys651, Cys645-Cys656, Cys658-Cys667, Cys672-Cys683, Cys677-Cys688, Cys690-Cys699, Cys710-Cys723, Cys725-Cys734, Cys738-Cys748, Cys742-Cys753, Cys755-Cys764, Cys769-Cys779, Cys773-Cys784, Cys786-Cys795, Cys800-Cys810, Cys804-Cys819, and Cys821-Cys830. 3 N-linked (GlcNAc...) asparagine glycosylation sites follow: Asn915, Asn938, and Asn1257. NHL repeat units follow at residues 1262-1306 (LELR…VKSL), 1332-1376 (ARCG…NGII), 1391-1442 (LSCD…IAGR), 1464-1491 (LESA…INRL), and 1520-1563 (CYSG…VSKN). One copy of the YD 1 repeat lies at 1573–1592 (YEAASPGEQELYVFNADGIH). An N-linked (GlcNAc...) asparagine glycan is attached at Asn1606. YD repeat units lie at residues 1609-1629 (YSAD…LKIR), 1672-1691 (YDGN…WTTF), and 1692-1714 (YDYD…TSLH). N-linked (GlcNAc...) asparagine glycans are attached at residues Asn1702, Asn1739, Asn1763, Asn1797, and Asn1882. YD repeat units lie at residues 1885-1904 (YFFN…ERTD), 1926-1944 (YLDK…YIFE), 1945-1965 (YDSS…HSMS), 1972-1989 (YIRN…VIFD), 1990-2011 (YSDD…VFYK), 2012-2029 (YGKL…TAVT), 2032-2052 (YDET…FSCT), 2055-2075 (YRKV…EGMI), 2083-2103 (YHDN…TPLP), 2109-2126 (YDEI…GVIY), 2127-2153 (YDIN…IKEV), 2155-2168 (YEMF…MTVQ), 2169-2192 (YDSM…TKYT), 2195-2215 (YDGD…WRYS), 2216-2236 (YDLN…LMPL), 2238-2258 (YDLR…DDDG), 2270-2290 (YNSK…SVQY), and 2292-2312 (YDGV…LQYF). The N-linked (GlcNAc...) asparagine glycan is linked to Asn1983. N-linked (GlcNAc...) asparagine glycosylation is present at Asn2187. N-linked (GlcNAc...) asparagine glycosylation is present at Asn2327. The stretch at 2338–2379 (YDLQGHLFAMESSSGEEYYVASDNTGTPLAVYSINGLMIKQL) is one YD 23 repeat. N-linked (GlcNAc...) asparagine glycosylation is present at Asn2638.

Belongs to the tenascin family. Teneurin subfamily. As to quaternary structure, homodimer; disulfide-linked. Heterodimer with either TENM1 or TENM3. May also form heterodimer with TENM4. In terms of processing, derives from the membrane form by proteolytic processing. Post-translationally, derives from the plasma membrane form by proteolytic cleavage and translocates to the nucleus. Homophilic binding of the C-terminal extracellular domain stimulates its proteolytic cleavage and release in the cytoplasmic. Is subjected to rapid degradation by the proteasome pathway. As to expression, expressed in the cortex, CA1, CA2, CA3, dentate gyrus and granular layer of the hippocampus. Expressed in the Purkinje cells and molecular layer of the cerebellum.

The protein localises to the cell membrane. Its subcellular location is the presynaptic cell membrane. It localises to the postsynaptic cell membrane. The protein resides in the endoplasmic reticulum. It is found in the golgi apparatus. The protein localises to the synapse. Its subcellular location is the cell projection. It localises to the dendritic spine. The protein resides in the filopodium. It is found in the growth cone. The protein localises to the nucleus. Its subcellular location is the PML body. In terms of biological role, involved in neural development, regulating the establishment of proper connectivity within the nervous system. Acts as a ligand of the ADGRL1 and ADGRL3 receptors that are expressed at the surface of adjacent cells. Promotes the formation of filopodia and enlarged growth cone in neuronal cells. Mediates axon guidance and homophilic and heterophilic cell-cell adhesion. May function as a cellular signal transducer. Functionally, induces gene transcription inhibition. The chain is Teneurin-2 (Tenm2) from Mus musculus (Mouse).